The following is a 512-amino-acid chain: Sporulation-regulated protein 3 (512 aa).

The segment at 31–68 (RQSSQGQYAVDSHPPKSPELKHRRQRSSSFVNGKCRNR) is disordered. The region spanning 106–365 (NGIDFTLMVA…EKCRSEMLRT (260 aa)) is the Septin-type G domain. Residues 116–123 (GQSGLGKT) form a G1 motif region. Residues 116–123 (GQSGLGKT), glycine 168, 247–255 (KSDLLTKEE), and arginine 315 contribute to the GTP site. Positions 165–168 (DTPG) are G3 motif. Residues 246 to 249 (AKSD) are G4 motif. Coiled coils occupy residues 376–406 (TKSV…LKNY) and 451–496 (RDWK…KSSN).

Belongs to the TRAFAC class TrmE-Era-EngA-EngB-Septin-like GTPase superfamily. Septin GTPase family. As to quaternary structure, interacts with other septin proteins such as SPR28 to form a ring at the bud neck.

The protein localises to the prospore membrane. It is found in the bud neck. In terms of biological role, septins are GTPases involved in cytokinesis that assemble into filaments and form a ring at the cleavage site. May act by recruiting MYO1 and HOF1, a protein involved in septation, to the site of cleavage. Septins are also involved in cell morphogenesis, bud site selection, chitin deposition, cell cycle regulation, cell compartmentalization and spore wall formation. The protein is Sporulation-regulated protein 3 (SPR3) of Saccharomyces cerevisiae (strain ATCC 204508 / S288c) (Baker's yeast).